The following is a 353-amino-acid chain: Ubiquinol oxidase 2, mitochondrial (353 aa).

The N-terminal 21 residues, 1–21 (MSQLITKAALRVLLVCGRGNC), are a transit peptide targeting the mitochondrion. The helical transmembrane segment at 178-198 (AMMLETVAAVPGMVGGMLLHL) threads the bilayer. 3 residues coordinate Fe cation: Glu182, Glu221, and His224. Residues 240 to 260 (LLVMLVQGIFFNSFFVCYVIS) traverse the membrane as a helical segment. Positions 272, 323, and 326 each coordinate Fe cation.

This sequence belongs to the alternative oxidase family. As to quaternary structure, homodimer; disulfide-linked. Fe cation is required as a cofactor. In terms of tissue distribution, maximally expressed in dry seeds. Detected in roots, stems and leaves.

The protein resides in the mitochondrion inner membrane. The enzyme catalyses 2 a ubiquinol + O2 = 2 a ubiquinone + 2 H2O. Catalyzes the cyanide-resistant oxidation of ubiquinol and the reduction of molecular oxygen to water, but does not translocate protons and consequently is not linked to oxidative phosphorylation. May increase respiration when the cytochrome respiratory pathway is restricted, or in response to low temperatures. The polypeptide is Ubiquinol oxidase 2, mitochondrial (AOX2) (Arabidopsis thaliana (Mouse-ear cress)).